The primary structure comprises 208 residues: V-type ATP synthase subunit E (208 aa).

This sequence belongs to the V-ATPase E subunit family.

Its function is as follows. Produces ATP from ADP in the presence of a proton gradient across the membrane. This is V-type ATP synthase subunit E from Chlamydia felis (strain Fe/C-56) (Chlamydophila felis).